A 156-amino-acid chain; its full sequence is Ribosome maturation factor RimP (156 aa).

The protein belongs to the RimP family.

The protein resides in the cytoplasm. Functionally, required for maturation of 30S ribosomal subunits. The chain is Ribosome maturation factor RimP from Microcystis aeruginosa (strain NIES-843 / IAM M-2473).